We begin with the raw amino-acid sequence, 878 residues long: MTKFTTEEVRSKFITYFKTNNHTHVPASSLIPHNDPSLMFVNSGMVQFKNVFTGQTKRPYHTAVTSQKSVRAGGKHNDLENVGYTARHHTFFEMLGNFSFGDYFKEQAIYYAWNLLTKEFELPKDKLYATIYHTDDEAASCWKKIAGFGDDRIIKIKTNDNFWSMGDTGPCGPCSEIFYDHGEQIYGGLPGTKYEDGDRFIEIWNMVFMQYEQIDKDTRIELPQKSIDTGMGLERMTAVLQHVSNNYDIDLFQEIINFTENIVKVKIEGEAKFSYRVIADHLRASSFLIADGVIPSNEGRGYVLRRIMRRAMRHAHMLGSQEPLMYKLLPKLVDLMGSVYPELKRAESFISRILEQEEIRFKTTLERGLKLLTEETETLKKGNELSGEIAFKLYDTYGFPLDLTEDILKNRDISIDHKGFEEQMLAQKERARKAWLGSGESKTDQLWFDIKEQHGSTEFLGYTLNEAECKIIALIKDNNLVNDIKKIDTQFLLISNQTPFYGESGGQMGDIGTIFAKDSDIEVIDTLKYLGSIIAHKCILKKGQINVGDSANFSIDIKYRQNLRIHHSATHILHAVLHEVLGQHVTQKGSLVAPTYLRFDISHSKAVTHEEITSIEDKVNEIIRDNHEVNTTLMTTEDAVKQGVMALFGEKYDSEVRVVKMGETSLELCGGTHVRRTGDIGSFKITSESAIAAGVRRIEAVCGEFVIKLIREKDSLLKSIENSLKTNKNELVTKVNNTLERNKELEKELEKTHLARLDLSIEQIEKQAEDIKGVKLIYRHIENLDNKVLRQAAANLTNKVEDLIVVYITGNNDKLSITVAVSKAITDKYNACIIAKELSLFLGGSGGGGQASLAQAGGSDIGKLTNIHEKLYSFITAS.

His567, His571, Cys669, and His673 together coordinate Zn(2+).

The protein belongs to the class-II aminoacyl-tRNA synthetase family. The cofactor is Zn(2+).

The protein resides in the cytoplasm. The enzyme catalyses tRNA(Ala) + L-alanine + ATP = L-alanyl-tRNA(Ala) + AMP + diphosphate. Catalyzes the attachment of alanine to tRNA(Ala) in a two-step reaction: alanine is first activated by ATP to form Ala-AMP and then transferred to the acceptor end of tRNA(Ala). Also edits incorrectly charged Ser-tRNA(Ala) and Gly-tRNA(Ala) via its editing domain. This Rickettsia akari (strain Hartford) protein is Alanine--tRNA ligase.